The sequence spans 152 residues: ATP synthase epsilon chain 2 (152 aa).

Belongs to the ATPase epsilon chain family. In terms of assembly, F-type ATPases have 2 components, CF(1) - the catalytic core - and CF(0) - the membrane proton channel. CF(1) has five subunits: alpha(3), beta(3), gamma(1), delta(1), epsilon(1). CF(0) has three main subunits: a, b and c.

The protein resides in the cell inner membrane. Its function is as follows. Produces ATP from ADP in the presence of a proton gradient across the membrane. In Burkholderia orbicola (strain AU 1054), this protein is ATP synthase epsilon chain 2.